Reading from the N-terminus, the 423-residue chain is F-box/LRR-repeat protein 2 (423 aa).

The F-box domain occupies 9 to 55 (GRINKKLPKELLLRIFSFLDIVTLCRCAQISKAWNILALDGSNWQRI). 13 LRR repeats span residues 61–87 (QTDVEGRVVENISKRCGGFLRKLSLRG), 88–113 (CIGVGDSSLKTFAQNCRNIEHLNLNG), 114–139 (CTKITDSTCYSLSRFCSKLKHLDLTS), 140–165 (CVSITNSSLKGISEGCRNLEYLNLSW), 166–191 (CDQITKDGIEALVRGCRGLKALLLRG), 192–217 (CTQLEDEALKHIQNYCHELVSLNLQS), 218–243 (CSRITDEGVVQICRGCHRLQALCLSG), 244–269 (CSNLTDASLTALGLNCPRLQILEAAR), 270–295 (CSHLTDAGFTLLARNCHELEKMDLEE), 296–321 (CILITDSTLIQLSIHCPKLQALSLSH), 322–350 (CELITDDGILHLSNSTCGHERLRVLELDN), 351–375 (CLLITDVALEHLENCRGLERLELYD), and 376–401 (CQQVTRAGIKRMRAQLPHVKVHAYFA). The segment at 80–90 (LRKLSLRGCIG) is interaction with Calmodulin. Residue K201 forms a Glycyl lysine isopeptide (Lys-Gly) (interchain with G-Cter in ubiquitin) linkage. Phosphothreonine is present on T404. A lipid anchor (S-geranylgeranyl cysteine) is attached at C420. The short motif at 420 to 423 (CVIL) is the CAAX motif element.

Part of the SCF (SKP1-CUL1-F-box) E3 ubiquitin-protein ligase complex SCF(FBXL2) composed of CUL1, SKP1, RBX1 and FBXL2. Interacts with calmodulin; may antagonize substrate ubiquitination by SCF(FBXL2). May interact with PIK3R1. Interacts with PTPN13. In terms of processing, phosphorylated by GSK-beta (GSK3B), promoting recognition by FBXO3, leading to its ubiquitination by the SCF(FBXO3) complex. Ubiquitinated at Lys-201 by the SCF(FBXO3) complex in response to lipopolysaccharide (LPS), leading to its degradation by the proteasome.

Its subcellular location is the membrane. It participates in protein modification; protein ubiquitination. In terms of biological role, calcium-activated substrate recognition component of the SCF (SKP1-cullin-F-box protein) E3 ubiquitin-protein ligase complex, SCF(FBXL2), which mediates the ubiquitination and subsequent proteasomal degradation of target proteins. Unlike many F-box proteins, FBXL2 does not seem to target phosphodegron within its substrates but rather calmodulin-binding motifs and is thereby antagonized by calmodulin. This is the case for the cyclins CCND2 and CCND3 which polyubiquitination and subsequent degradation are inhibited by calmodulin. Through CCND2 and CCND3 degradation induces cell-cycle arrest in G(0). SCF(FBXL2) also mediates PIK3R2 ubiquitination and proteasomal degradation thereby regulating phosphatidylinositol 3-kinase signaling and autophagy. PCYT1A monoubiquitination by SCF(FBXL2) and subsequent degradation regulates synthesis of phosphatidylcholine, which is utilized for formation of membranes and of pulmonary surfactant. The SCF(FBXL2) complex acts as a regulator of inflammation by mediating ubiquitination and degradation of TRAF proteins (TRAF1, TRAF2, TRAF3, TRAF4, TRAF5 and TRAF6). The SCF(FBXL2) complex acts as a negative regulator of the NLRP3 inflammasome by mediating ubiquitination and degradation of NLRP3. In Pongo abelii (Sumatran orangutan), this protein is F-box/LRR-repeat protein 2.